The primary structure comprises 1332 residues: Sister chromatid cohesion protein PDS5 homolog A (1332 aa).

Met-1 carries the N-acetylmethionine modification. The stretch at 392–428 (ALVNDQLLGFVRERTLDKRWRVRKEAMMGLAQLYKKY) is one HEAT repeat. Phosphoserine is present on Ser-1096. The segment at 1138 to 1332 (GVLGTVNKPL…PAERQIDLQR (195 aa)) is disordered. Lys-1145 bears the N6-acetyllysine mark. The span at 1160–1173 (GTETGSNINANSEL) shows a compositional bias: polar residues. Phosphoserine is present on residues Ser-1174 and Ser-1194. Thr-1207 carries the post-translational modification Phosphothreonine. Lys-1210 is modified (N6-acetyllysine). Over residues 1222-1232 (SDQSTQGNISS) the composition is skewed to polar residues. An N6-acetyllysine modification is found at Lys-1288. Ser-1303 is modified (phosphoserine). Residues 1316 to 1332 (DGAKKAVPAERQIDLQR) show a composition bias toward basic and acidic residues.

The protein belongs to the PDS5 family. In terms of assembly, interacts with the cohesin complex. Interacts with WAPL (via FGF motifs) or CDCA5 (via the FGF motif); the interaction is direct, cohesin-dependent and competitive. Interacts with SMC3. Interacts with TP63.

It localises to the nucleus. Probable regulator of sister chromatid cohesion in mitosis which may stabilize cohesin complex association with chromatin. May couple sister chromatid cohesion during mitosis to DNA replication. Cohesion ensures that chromosome partitioning is accurate in both meiotic and mitotic cells and plays an important role in DNA repair. This chain is Sister chromatid cohesion protein PDS5 homolog A (Pds5a), found in Mus musculus (Mouse).